The following is a 198-amino-acid chain: E3 ubiquitin-protein ligase rnf152 (198 aa).

Residues 12 to 55 (CQICFNYFSQRRLPKLLHCQHTCCSVCLSQMRLSQREIRCPWCR) form an RING-type zinc finger. A helical transmembrane segment spans residues 162 to 182 (TGVCTVLLVAFILIFLLGIVL).

The protein belongs to the RNF152 family.

It is found in the lysosome membrane. It catalyses the reaction S-ubiquitinyl-[E2 ubiquitin-conjugating enzyme]-L-cysteine + [acceptor protein]-L-lysine = [E2 ubiquitin-conjugating enzyme]-L-cysteine + N(6)-ubiquitinyl-[acceptor protein]-L-lysine.. It functions in the pathway protein modification; protein ubiquitination. Functionally, E3 ubiquitin-protein ligase that acts as a negative regulator of mTORC1 signaling by mediating ubiquitination of RagA/RRAGA and RHEB. Catalyzes 'Lys-63'-linked polyubiquitination of RagA/RRAGA in response to amino acid starvation, thereby regulating mTORC1 signaling. Also mediates monoubiquitination of RHEB, promoting its association with the TSC-TBC complex and subsequent inhibition. Also mediates 'Lys-48'-linked polyubiquitination of target proteins and their subsequent targeting to the proteasome for degradation. The sequence is that of E3 ubiquitin-protein ligase rnf152 from Danio rerio (Zebrafish).